Here is a 339-residue protein sequence, read N- to C-terminus: DNA-directed RNA polymerase subunit alpha (339 aa).

The tract at residues 1 to 233 is alpha N-terminal domain (alpha-NTD); that stretch reads MVREEVAGST…DLFLPFLHAE (233 aa). Positions 266–339 are alpha C-terminal domain (alpha-CTD); it reads GIPLNCIFID…IDLLKNKLSF (74 aa).

This sequence belongs to the RNA polymerase alpha chain family. In plastids the minimal PEP RNA polymerase catalytic core is composed of four subunits: alpha, beta, beta', and beta''. When a (nuclear-encoded) sigma factor is associated with the core the holoenzyme is formed, which can initiate transcription.

The protein localises to the plastid. It is found in the chloroplast. It carries out the reaction RNA(n) + a ribonucleoside 5'-triphosphate = RNA(n+1) + diphosphate. DNA-dependent RNA polymerase catalyzes the transcription of DNA into RNA using the four ribonucleoside triphosphates as substrates. This is DNA-directed RNA polymerase subunit alpha from Aegilops speltoides (Goatgrass).